Consider the following 223-residue polypeptide: Phosphoribosylformylglycinamidine synthase subunit PurQ (223 aa).

Positions 4-223 (FAVVVFPGTN…FRSMVEWARK (220 aa)) constitute a Glutamine amidotransferase type-1 domain. Catalysis depends on Cys-85, which acts as the Nucleophile. Active-site residues include His-196 and Glu-198.

In terms of assembly, part of the FGAM synthase complex composed of 1 PurL, 1 PurQ and 2 PurS subunits.

It localises to the cytoplasm. It carries out the reaction N(2)-formyl-N(1)-(5-phospho-beta-D-ribosyl)glycinamide + L-glutamine + ATP + H2O = 2-formamido-N(1)-(5-O-phospho-beta-D-ribosyl)acetamidine + L-glutamate + ADP + phosphate + H(+). The catalysed reaction is L-glutamine + H2O = L-glutamate + NH4(+). The protein operates within purine metabolism; IMP biosynthesis via de novo pathway; 5-amino-1-(5-phospho-D-ribosyl)imidazole from N(2)-formyl-N(1)-(5-phospho-D-ribosyl)glycinamide: step 1/2. Its function is as follows. Part of the phosphoribosylformylglycinamidine synthase complex involved in the purines biosynthetic pathway. Catalyzes the ATP-dependent conversion of formylglycinamide ribonucleotide (FGAR) and glutamine to yield formylglycinamidine ribonucleotide (FGAM) and glutamate. The FGAM synthase complex is composed of three subunits. PurQ produces an ammonia molecule by converting glutamine to glutamate. PurL transfers the ammonia molecule to FGAR to form FGAM in an ATP-dependent manner. PurS interacts with PurQ and PurL and is thought to assist in the transfer of the ammonia molecule from PurQ to PurL. This is Phosphoribosylformylglycinamidine synthase subunit PurQ from Thermococcus kodakarensis (strain ATCC BAA-918 / JCM 12380 / KOD1) (Pyrococcus kodakaraensis (strain KOD1)).